Here is a 698-residue protein sequence, read N- to C-terminus: Interleukin-17 receptor C (698 aa).

Positions 1–21 (MPVSWFLLSLALGRNPVVVSL) are cleaved as a signal peptide. The Extracellular portion of the chain corresponds to 22-464 (ERLMEPQDTA…CPMDKYIHRR (443 aa)). N-linked (GlcNAc...) asparagine glycosylation is present at Asn182. Cysteines 190 and 202 form a disulfide. N-linked (GlcNAc...) asparagine glycans are attached at residues Asn209, Asn249, Asn255, and Asn259. Intrachain disulfides connect Cys266-Cys316, Cys268-Cys284, Cys325-Cys334, Cys364-Cys378, Cys406-Cys413, and Cys440-Cys455. The chain crosses the membrane as a helical span at residues 465–485 (WVLVWLACLLLAAALFFFLLL). Residues 486–698 (KKDRRKAARG…WDLGPCTTLE (213 aa)) are Cytoplasmic-facing. An SEFIR domain is found at 496–645 (SRTALLLHSA…LPSQLPAFLD (150 aa)).

In terms of assembly, homodimer; disulfide-linked. Heterodimer with IL17RA. Heterodimerization with IL17RA is independent of the cytoplasmic tail. Associates with non-glycosylated IL17RA constitutively. Binding of IL17A and IL17F induces association with glycosylated IL17RA. Forms complexes with 2:1 binding stoichiometry: two receptor chains for one interleukin molecule. IL17A homodimer preferentially drives the formation of IL17RA-IL17RC heterodimeric receptor complex, whereas IL17F homodimer forms predominantly complexes with IL17RC homodimer. IL17A-IL17F forms complexes with IL17RA-IL17RC, but with lower affinity when compared to IL17A homodimer. IL17RC chain cannot distinguish between IL17A and IL17F molecules, potentially enabling the formation of topologically distinct complexes. Interacts (through SEFIR domain and extended downstream region) with TRAF3IP2/ACT1 (phosphorylated). In terms of tissue distribution, highly expressed in colonic epithelial cells. Expressed in lung epithelial cells. Expressed in macrophages. Highly expressed in B-1a B cells and at a lower extent in B-1b and B-2 B cells (at protein level).

Its subcellular location is the cell membrane. Receptor for IL17A and IL17F, major effector cytokines of innate and adaptive immune system involved in antimicrobial host defense and maintenance of tissue integrity. Receptor for IL17A and IL17F homodimers as part of a heterodimeric complex with IL17RA. Receptor for the heterodimer formed by IL17A and IL17B as part of a heterodimeric complex with IL17RA. Has also been shown to be the cognate receptor for IL17F and to bind IL17A with high affinity without the need for IL17RA. Upon binding of IL17F homodimer triggers downstream activation of TRAF6 and NF-kappa-B signaling pathway. Induces transcriptional activation of IL33, a potent cytokine that stimulates group 2 innate lymphoid cells and adaptive T-helper 2 cells involved in pulmonary allergic response to fungi. Promotes sympathetic innervation of peripheral organs by coordinating the communication between gamma-delta T cells and parenchymal cells. Stimulates sympathetic innervation of thermogenic adipose tissue by driving TGFB1 expression. Binding of IL17A-IL17F to IL17RA-IL17RC heterodimeric receptor complex triggers homotypic interaction of IL17RA and IL17RC chains with TRAF3IP2 adapter through SEFIR domains. This leads to downstream TRAF6-mediated activation of NF-kappa-B and MAPkinase pathways ultimately resulting in transcriptional activation of cytokines, chemokines, antimicrobial peptides and matrix metalloproteinases, with potential strong immune inflammation. Primarily induces neutrophil activation and recruitment at infection and inflammatory sites. Stimulates the production of antimicrobial beta-defensins DEFB1, DEFB103A, and DEFB104A by mucosal epithelial cells, limiting the entry of microbes through the epithelial barriers. The chain is Interleukin-17 receptor C (Il17rc) from Mus musculus (Mouse).